The primary structure comprises 278 residues: Complement component 1 Q subcomponent-binding protein, mitochondrial (278 aa).

The transit peptide at 1-70 directs the protein to the mitochondrion; that stretch reads MFQLLRCVPR…PCACGCGCSG (70 aa). The tract at residues 73–90 is C1q binding; the sequence is TEGDKAFVDFLSDEIKEE. Phosphoserine is present on Ser-84. N6-acetyllysine is present on residues Lys-88 and Lys-91. The segment at 136–164 is disordered; the sequence is IPPAFGGEEEEPSQGQKAEEQEPELTSTP. Residues 166–209 form an interaction with MAVS region; it reads FVVEVTKDGSSKALVLDCHYPEDEIGQEDDQSDIFSIKEVSFQA. Tyr-185 is subject to Phosphotyrosine. Phosphoserine occurs at positions 197 and 201. Phosphothreonine is present on Thr-210.

Belongs to the MAM33 family. As to quaternary structure, homotrimer; three monomers form a donut-shaped structure with an unusually asymmetric charge distribution on the surface. Interacts with CDK13, HRK, VTN, NFYB, ADRA1B, FOXC1, DDX21, DDX50, NCL, SRSF1 and SRSF9. Interacts with CD93; the association may represent a cell surface C1q receptor. Interacts with KRT1; the association represents a cell surface kininogen receptor. Interacts with CD209; the interaction is indicative for a C1q:C1QBP:CD209 signaling complex. Interacts with FBL and RRP1; the respective interactions with C1QBP are competitive. Probably associates with the mitoribosome. Interacts with MAVS; the interaction occurs upon viral transfection. Interacts with PPIF. Interacts with U2AF1L4. Interacts with PLEKHN1. Interacts with VGF-derived peptide TLQP-21. Interacts with MRE11 and RAD50; forming the MRC (MRE11-RAD50-C1QBP) complex that inhibits the activity of MRE11.

Its subcellular location is the mitochondrion matrix. It localises to the nucleus. It is found in the cell membrane. The protein resides in the secreted. The protein localises to the cytoplasm. Its subcellular location is the nucleolus. In terms of biological role, multifunctional and multicompartmental protein involved in inflammation and infection processes, ribosome biogenesis, protein synthesis in mitochondria, regulation of apoptosis, transcriptional regulation and pre-mRNA splicing. At the cell surface is thought to act as an endothelial receptor for plasma proteins of the complement and kallikrein-kinin cascades. Putative receptor for C1q; specifically binds to the globular 'heads' of C1q thus inhibiting C1; may perform the receptor function through a complex with C1qR/CD93. In complex with cytokeratin-1/KRT1 is a high affinity receptor for kininogen-1/HMWK. Can also bind other plasma proteins, such as coagulation factor XII leading to its autoactivation. May function to bind initially fluid kininogen-1 to the cell membrane. The secreted form may enhance both extrinsic and intrinsic coagulation pathways. It is postulated that the cell surface form requires docking with transmembrane proteins for downstream signaling which might be specific for a cell-type or response. By acting as C1q receptor is involved in chemotaxis of immature dendritic cells and neutrophils and is proposed to signal through CD209/DC-SIGN on immature dendritic cells, through integrin alpha-4/beta-1 during trophoblast invasion of the decidua, and through integrin beta-1 during endothelial cell adhesion and spreading. Signaling involved in inhibition of innate immune response is implicating the PI3K-AKT/PKB pathway. Required for protein synthesis in mitochondria. In mitochondrial translation may be involved in formation of functional 55S mitoribosomes; the function seems to involve its RNA-binding activity. Acts as a RNA modification reader, which specifically recognizes and binds mitochondrial RNAs modified by C5-methylcytosine (m5C) in response to stress, and promotes recruitment of the mitochondrial degradosome complex, leading to their degradation. May be involved in the nucleolar ribosome maturation process; the function may involve the exchange of FBL for RRP1 in the association with pre-ribosome particles. Involved in regulation of RNA splicing by inhibiting the RNA-binding capacity of SRSF1 and its phosphorylation. Is required for the nuclear translocation of splicing factor U2AF1L4. Involved in regulation of CDKN2A- and HRK-mediated apoptosis. Stabilizes mitochondrial CDKN2A isoform smARF. May be involved in regulation of FOXC1 transcriptional activity and NFY/CCAAT-binding factor complex-mediated transcription. May play a role in antibacterial defense as it can bind to cell surface hyaluronan and inhibit Streptococcus pneumoniae hyaluronate lyase. May be involved in modulation of the immune response; ligation by HCV core protein is resulting in suppression of interleukin-12 production in monocyte-derived dendritic cells. Involved in regulation of antiviral response by inhibiting RIGI- and IFIH1-mediated signaling pathways probably involving its association with MAVS after viral infection. Acts as a regulator of DNA repair via homologous recombination by inhibiting the activity of MRE11: interacts with unphosphorylated MRE11 and RAD50 in absence of DNA damage, preventing formation and activity of the MRN complex. Following DNA damage, dissociates from phosphorylated MRE11, allowing formation of the MRN complex. In Bos taurus (Bovine), this protein is Complement component 1 Q subcomponent-binding protein, mitochondrial (C1QBP).